The chain runs to 250 residues: UPF0259 membrane protein PC1_1998 (250 aa).

6 helical membrane-spanning segments follow: residues 20 to 40 (FISI…LNHA), 90 to 110 (FAAL…IQLV), 132 to 152 (LLFL…LLVI), 156 to 176 (LLAI…SGIF), 192 to 212 (ATAP…LVVS), and 222 to 242 (LGVV…IYLF).

Belongs to the UPF0259 family.

It localises to the cell inner membrane. The chain is UPF0259 membrane protein PC1_1998 from Pectobacterium carotovorum subsp. carotovorum (strain PC1).